The chain runs to 217 residues: N-(5'-phosphoribosyl)anthranilate isomerase (217 aa).

This sequence belongs to the TrpF family.

It carries out the reaction N-(5-phospho-beta-D-ribosyl)anthranilate = 1-(2-carboxyphenylamino)-1-deoxy-D-ribulose 5-phosphate. The protein operates within amino-acid biosynthesis; L-tryptophan biosynthesis; L-tryptophan from chorismate: step 3/5. In Chlorobium phaeobacteroides (strain BS1), this protein is N-(5'-phosphoribosyl)anthranilate isomerase.